The chain runs to 550 residues: Glucose-6-phosphate isomerase (550 aa).

Glutamate 357 serves as the catalytic Proton donor. Active-site residues include histidine 389 and lysine 509.

This sequence belongs to the GPI family.

It localises to the cytoplasm. The catalysed reaction is alpha-D-glucose 6-phosphate = beta-D-fructose 6-phosphate. It participates in carbohydrate biosynthesis; gluconeogenesis. Its pathway is carbohydrate degradation; glycolysis; D-glyceraldehyde 3-phosphate and glycerone phosphate from D-glucose: step 2/4. Functionally, catalyzes the reversible isomerization of glucose-6-phosphate to fructose-6-phosphate. The polypeptide is Glucose-6-phosphate isomerase (Anaeromyxobacter dehalogenans (strain 2CP-C)).